The sequence spans 428 residues: Histidine--tRNA ligase (428 aa).

This sequence belongs to the class-II aminoacyl-tRNA synthetase family. As to quaternary structure, homodimer.

It is found in the cytoplasm. It carries out the reaction tRNA(His) + L-histidine + ATP = L-histidyl-tRNA(His) + AMP + diphosphate + H(+). This chain is Histidine--tRNA ligase, found in Chlamydia trachomatis serovar L2 (strain ATCC VR-902B / DSM 19102 / 434/Bu).